The following is a 409-amino-acid chain: Multifunctional CCA protein (409 aa).

2 residues coordinate ATP: Gly-8 and Arg-11. Gly-8 and Arg-11 together coordinate CTP. Positions 21 and 23 each coordinate Mg(2+). ATP is bound by residues Arg-91, Arg-137, and Arg-140. CTP-binding residues include Arg-91, Arg-137, and Arg-140. The HD domain maps to 228–329 (SGLHTLSVLE…LELLQSFDVY (102 aa)).

Belongs to the tRNA nucleotidyltransferase/poly(A) polymerase family. Bacterial CCA-adding enzyme type 1 subfamily. As to quaternary structure, monomer. Can also form homodimers and oligomers. Requires Mg(2+) as cofactor. It depends on Ni(2+) as a cofactor.

It catalyses the reaction a tRNA precursor + 2 CTP + ATP = a tRNA with a 3' CCA end + 3 diphosphate. The enzyme catalyses a tRNA with a 3' CCA end + 2 CTP + ATP = a tRNA with a 3' CCACCA end + 3 diphosphate. Catalyzes the addition and repair of the essential 3'-terminal CCA sequence in tRNAs without using a nucleic acid template. Adds these three nucleotides in the order of C, C, and A to the tRNA nucleotide-73, using CTP and ATP as substrates and producing inorganic pyrophosphate. tRNA 3'-terminal CCA addition is required both for tRNA processing and repair. Also involved in tRNA surveillance by mediating tandem CCA addition to generate a CCACCA at the 3' terminus of unstable tRNAs. While stable tRNAs receive only 3'-terminal CCA, unstable tRNAs are marked with CCACCA and rapidly degraded. This chain is Multifunctional CCA protein, found in Pseudomonas fluorescens (strain Pf0-1).